The chain runs to 310 residues: Biotin synthase (310 aa).

Positions Gly34–Arg262 constitute a Radical SAM core domain. Cys49, Cys53, and Cys56 together coordinate [4Fe-4S] cluster. Cys93, Cys125, Cys185, and Arg257 together coordinate [2Fe-2S] cluster.

Belongs to the radical SAM superfamily. Biotin synthase family. In terms of assembly, homodimer. [4Fe-4S] cluster serves as cofactor. The cofactor is [2Fe-2S] cluster.

It catalyses the reaction (4R,5S)-dethiobiotin + (sulfur carrier)-SH + 2 reduced [2Fe-2S]-[ferredoxin] + 2 S-adenosyl-L-methionine = (sulfur carrier)-H + biotin + 2 5'-deoxyadenosine + 2 L-methionine + 2 oxidized [2Fe-2S]-[ferredoxin]. The protein operates within cofactor biosynthesis; biotin biosynthesis; biotin from 7,8-diaminononanoate: step 2/2. Its function is as follows. Catalyzes the conversion of dethiobiotin (DTB) to biotin by the insertion of a sulfur atom into dethiobiotin via a radical-based mechanism. This chain is Biotin synthase, found in Synechococcus sp. (strain JA-3-3Ab) (Cyanobacteria bacterium Yellowstone A-Prime).